Reading from the N-terminus, the 629-residue chain is DNA mismatch repair protein MutL (629 aa).

Belongs to the DNA mismatch repair MutL/HexB family.

Functionally, this protein is involved in the repair of mismatches in DNA. It is required for dam-dependent methyl-directed DNA mismatch repair. May act as a 'molecular matchmaker', a protein that promotes the formation of a stable complex between two or more DNA-binding proteins in an ATP-dependent manner without itself being part of a final effector complex. This is DNA mismatch repair protein MutL from Rhodospirillum rubrum (strain ATCC 11170 / ATH 1.1.1 / DSM 467 / LMG 4362 / NCIMB 8255 / S1).